Consider the following 327-residue polypeptide: MSLKSCLMWVLGEHDEPYRKARETILKLVGNTPLVRVKKCLPEDIPEDVEIWAKLESFNPGGSVKDRPALSMFLDALKRGLIKEGKVVIDATSGNTGIALAMVGAALGVPVELAMPANVSEERKKIIKAFGAKLYLTDPLEGTDGAILFVRELVQKYPEKYVYLDQYNNPANWKAHFYSTGIEIWNQTKGRITHFVAGIGTGGTIMGTGRRLKIYNPNIQVIGVQPAYPFHGIEGLKHIESSIKPGIFDETFLDRTIFVETEDAYYWARELAKKDAIFVGQSSGAALWACIQLARELAKKGEKGVIVTVFPDGGEKYLTTALFSDKD.

Lys65 bears the N6-(pyridoxal phosphate)lysine mark. Residues Asn95, 200–204 (GTGGT), and Ser282 each bind pyridoxal 5'-phosphate.

This sequence belongs to the cysteine synthase/cystathionine beta-synthase family. Requires pyridoxal 5'-phosphate as cofactor.

It catalyses the reaction O-acetyl-L-serine + hydrogen sulfide = L-cysteine + acetate. Its pathway is amino-acid biosynthesis; L-cysteine biosynthesis; L-cysteine from L-serine: step 2/2. In Aquifex aeolicus (strain VF5), this protein is Cysteine synthase (cysM).